The chain runs to 187 residues: Translation initiation factor IF-3 (187 aa).

Belongs to the IF-3 family. Monomer.

The protein resides in the cytoplasm. IF-3 binds to the 30S ribosomal subunit and shifts the equilibrium between 70S ribosomes and their 50S and 30S subunits in favor of the free subunits, thus enhancing the availability of 30S subunits on which protein synthesis initiation begins. This Leptospira biflexa serovar Patoc (strain Patoc 1 / Ames) protein is Translation initiation factor IF-3.